The sequence spans 318 residues: MTSPENVRRVACVGAGVIGGGWVAHFLARGYEVTAWDPAPDAEPRLRRLVEAAWPTLTRLGLAEGASTDRLTVTDTLEQAVADAEFVQESAPEKLDLKRDLLARLDAATPPGVVIASSTSGYPMTDMQTTAADPSRLVVGHPFNPPYLIPLVEVVGGERTAAAAVAWASRFYEVAGKSVITMDNEVPGFIANRLQEALWREALHMVASGEATVRDIDLSITEGPGLRWAVMGPMLTFALAGGEGGMAHMLDHFGPSLKSPWTRLAAPELDKELYDAVVAGCDEAADGRSIADLVAERDRGVVEVLRATGRLGPEEDSR.

14–19 (GAGVIG) contributes to the NAD(+) binding site.

It belongs to the 3-hydroxyacyl-CoA dehydrogenase family. L-carnitine dehydrogenase subfamily. Homodimer.

It localises to the cytoplasm. It catalyses the reaction carnitine + NAD(+) = 3-dehydrocarnitine + NADH + H(+). It participates in amine and polyamine metabolism; carnitine metabolism. Functionally, catalyzes the NAD(+)-dependent oxidation of L-carnitine to 3-dehydrocarnitine. The chain is L-carnitine dehydrogenase from Streptomyces coelicolor (strain ATCC BAA-471 / A3(2) / M145).